We begin with the raw amino-acid sequence, 320 residues long: Cytochrome f (320 aa).

An N-terminal signal peptide occupies residues 1–35; it reads MHTKNLFYSRTQQITQYLSALLMMVILTRTSISSA. Heme is bound by residues tyrosine 36, cysteine 56, cysteine 59, and histidine 60. Residues 286 to 306 traverse the membrane as a helical segment; the sequence is VQVLLFFFASIILAQIFLVLK.

The protein belongs to the cytochrome f family. The 4 large subunits of the cytochrome b6-f complex are cytochrome b6, subunit IV (17 kDa polypeptide, petD), cytochrome f and the Rieske protein, while the 4 small subunits are PetG, PetL, PetM and PetN. The complex functions as a dimer. It depends on heme as a cofactor.

Its subcellular location is the plastid thylakoid membrane. Component of the cytochrome b6-f complex, which mediates electron transfer between photosystem II (PSII) and photosystem I (PSI), cyclic electron flow around PSI, and state transitions. The protein is Cytochrome f of Cuscuta gronovii (Common dodder).